Consider the following 815-residue polypeptide: G-type lectin S-receptor-like serine/threonine-protein kinase SD1-1 (815 aa).

Positions 1–22 are cleaved as a signal peptide; that stretch reads MREIHSLFSLSLFLISSSLSVA. The Extracellular segment spans residues 23-438; sequence LDYNVITPKE…FAKIEFKGRE (416 aa). One can recognise a Bulb-type lectin domain in the interval 25 to 152; sequence YNVITPKEFL…EEAVLWQSFD (128 aa). 3 N-linked (GlcNAc...) asparagine glycosylation sites follow: asparagine 93, asparagine 249, and asparagine 265. The EGF-like domain maps to 288–326; it reads PEDECDYYSICGAYAVCGINSKNTPSCSCLQGFKPKSGR. Intrachain disulfides connect cysteine 292-cysteine 304 and cysteine 298-cysteine 314. Residues asparagine 329 and asparagine 385 are each glycosylated (N-linked (GlcNAc...) asparagine). Residues 345 to 428 form the PAN domain; the sequence is CEKKDAFVKF…FGQDVYIRMG (84 aa). 2 disulfides stabilise this stretch: cysteine 378-cysteine 403 and cysteine 382-cysteine 388. A helical membrane pass occupies residues 439-459; sequence VVGMVVGSVVAIAVVLVVVFA. The Cytoplasmic segment spans residues 460 to 815; it reads CFRKKIMKRY…EVSITMLQGR (356 aa). Residues 500 to 783 enclose the Protein kinase domain; that stretch reads FSYVNFLGRG…SDSSLPHPTQ (284 aa). ATP is bound by residues 506–514 and lysine 528; that span reads LGRGGFGPV. Serine 534 carries the phosphoserine modification. Residues 589-606 are caM-binding; that stretch reads RRSTELDWKKRMNIINGV. Residue aspartate 625 is the Proton acceptor of the active site. A Phosphoserine modification is found at serine 642. At threonine 659 the chain carries Phosphothreonine. 2 positions are modified to phosphoserine: serine 797 and serine 803. Threonine 810 bears the Phosphothreonine mark.

This sequence belongs to the protein kinase superfamily. Ser/Thr protein kinase family. In terms of assembly, interacts with PUB9, PUB13 and PUB14.

The protein resides in the cell membrane. The enzyme catalyses L-seryl-[protein] + ATP = O-phospho-L-seryl-[protein] + ADP + H(+). It catalyses the reaction L-threonyl-[protein] + ATP = O-phospho-L-threonyl-[protein] + ADP + H(+). The protein is G-type lectin S-receptor-like serine/threonine-protein kinase SD1-1 (SD11) of Arabidopsis thaliana (Mouse-ear cress).